Consider the following 94-residue polypeptide: Protein translocase subunit SecE (94 aa).

A disordered region spans residues 1–32 (MTDAVGSIDMPDAQDEAPDSKKSRKGGKRGKK). Over residues 22–32 (KSRKGGKRGKK) the composition is skewed to basic residues. The helical transmembrane segment at 65–85 (TVVIIFVVIMIGLVTLIDYGF) threads the bilayer.

Belongs to the SecE/SEC61-gamma family. In terms of assembly, component of the Sec protein translocase complex. Heterotrimer consisting of SecY, SecE and SecG subunits. The heterotrimers can form oligomers, although 1 heterotrimer is thought to be able to translocate proteins. Interacts with the ribosome. Interacts with SecDF, and other proteins may be involved. Interacts with SecA.

Its subcellular location is the cell membrane. Functionally, essential subunit of the Sec protein translocation channel SecYEG. Clamps together the 2 halves of SecY. May contact the channel plug during translocation. The chain is Protein translocase subunit SecE from Streptomyces coelicolor (strain ATCC BAA-471 / A3(2) / M145).